We begin with the raw amino-acid sequence, 107 residues long: L-amino-acid oxidase (107 aa).

Glycine 35–arginine 38 provides a ligand contact to FAD. Substrate is bound by residues arginine 38 and histidine 49.

It belongs to the flavin monoamine oxidase family. FIG1 subfamily. As to quaternary structure, homodimer; non-covalently linked. FAD is required as a cofactor. Post-translationally, N-glycosylated. In terms of tissue distribution, expressed by the venom gland.

It localises to the secreted. The catalysed reaction is an L-alpha-amino acid + O2 + H2O = a 2-oxocarboxylate + H2O2 + NH4(+). It catalyses the reaction L-leucine + O2 + H2O = 4-methyl-2-oxopentanoate + H2O2 + NH4(+). The enzyme catalyses L-phenylalanine + O2 + H2O = 3-phenylpyruvate + H2O2 + NH4(+). It carries out the reaction L-tryptophan + O2 + H2O = indole-3-pyruvate + H2O2 + NH4(+). The catalysed reaction is L-methionine + O2 + H2O = 4-methylsulfanyl-2-oxobutanoate + H2O2 + NH4(+). It catalyses the reaction L-isoleucine + O2 + H2O = (S)-3-methyl-2-oxopentanoate + H2O2 + NH4(+). The enzyme catalyses L-arginine + O2 + H2O = 5-guanidino-2-oxopentanoate + H2O2 + NH4(+). It carries out the reaction L-histidine + O2 + H2O = 3-(imidazol-5-yl)pyruvate + H2O2 + NH4(+). Its function is as follows. Catalyzes an oxidative deamination of predominantly hydrophobic and aromatic L-amino acids, thus producing hydrogen peroxide that may contribute to the diverse toxic effects of this enzyme. Shows high activity on L-Met, moderate activity on L-Trp, L-Leu, L-His, L-Phe, L-Arg, L-Ile, low activity on L-Val, L-Glu, L-Lys, L-Gln, L-Asn, L-Tyr, L-Ala, and no activity on L-Asp, L-Ser, L-Pro, L-Gly, L-Thr and L-Cys. Shows antimicrobial activity inhibiting the growth of both Gram-negative and Gram-positive bacteria. Also inhibits platelet aggregation induced by ADP or collagen. Effects of snake L-amino oxidases on platelets are controversial, since they either induce aggregation or inhibit agonist-induced aggregation. These different effects are probably due to different experimental conditions. This protein may also induce hemorrhage, hemolysis, edema, apoptosis, and have antiparasitic activities. The polypeptide is L-amino-acid oxidase (Macrovipera lebetinus (Levantine viper)).